A 311-amino-acid polypeptide reads, in one-letter code: Porphobilinogen deaminase (311 aa).

Residue Cys242 is modified to S-(dipyrrolylmethanemethyl)cysteine.

This sequence belongs to the HMBS family. As to quaternary structure, monomer. Requires dipyrromethane as cofactor.

It catalyses the reaction 4 porphobilinogen + H2O = hydroxymethylbilane + 4 NH4(+). It functions in the pathway porphyrin-containing compound metabolism; protoporphyrin-IX biosynthesis; coproporphyrinogen-III from 5-aminolevulinate: step 2/4. Functionally, tetrapolymerization of the monopyrrole PBG into the hydroxymethylbilane pre-uroporphyrinogen in several discrete steps. In Baumannia cicadellinicola subsp. Homalodisca coagulata, this protein is Porphobilinogen deaminase.